The sequence spans 477 residues: Angiotensinogen (477 aa).

Residues 1–24 (MTPTGAGLKATIFCILTWVSLTAG) form the signal peptide. Cys42 and Cys161 are disulfide-bonded. N-linked (GlcNAc...) asparagine glycans are attached at residues Asn295 and Asn319.

Belongs to the serpin family. In terms of processing, in response to low blood pressure, the enzyme renin/REN cleaves angiotensinogen to produce angiotensin-1. Angiotensin-1 is a substrate of ACE (angiotensin converting enzyme) that removes a dipeptide to yield the physiologically active peptide angiotensin-2. Angiotensin-1 and angiotensin-2 can be further processed to generate angiotensin-3, angiotensin-4. Angiotensin 1-9 is cleaved from angiotensin-1 by ACE2 and can be further processed by ACE to produce angiotensin 1-7, angiotensin 1-5 and angiotensin 1-4. Angiotensin 1-7 has also been proposed to be cleaved from angiotensin-2 by ACE2 or from angiotensin-1 by MME (neprilysin). Post-translationally, the disulfide bond is labile. Angiotensinogen is present in the circulation in a near 40:60 ratio with the oxidized disulfide-bonded form, which preferentially interacts with receptor-bound renin.

Its subcellular location is the secreted. Functionally, essential component of the renin-angiotensin system (RAS), a potent regulator of blood pressure, body fluid and electrolyte homeostasis. In terms of biological role, acts directly on vascular smooth muscle as a potent vasoconstrictor, affects cardiac contractility and heart rate through its action on the sympathetic nervous system, and alters renal sodium and water absorption through its ability to stimulate the zona glomerulosa cells of the adrenal cortex to synthesize and secrete aldosterone. Acts by binding to angiotensin receptors AGTR1 and AGTR2. Also binds the DEAR/FBXW7-AS1 receptor. Stimulates aldosterone release. Its function is as follows. Is a ligand for the G-protein coupled receptor MAS1. Has vasodilator and antidiuretic effects. Has an antithrombotic effect that involves MAS1-mediated release of nitric oxide from platelets. This Rattus norvegicus (Rat) protein is Angiotensinogen (Agt).